The sequence spans 831 residues: Cadherin-related family member 3 (831 aa).

The first 19 residues, 1-19, serve as a signal peptide directing secretion; it reads MQGAVIVLVLFGITSGGEA. Residues 20 to 711 are Extracellular-facing; it reads LHLLHLPATS…VYSTSAWYVP (692 aa). Cadherin domains follow at residues 24 to 132, 136 to 236, 237 to 344, 346 to 466, 462 to 570, and 567 to 693; these read HLPA…PPQF, LAQG…TPRF, TSPR…NPAT, RKLT…RPSY, ERPS…TPNF, and TPNF…RPRI. N-linked (GlcNAc...) asparagine glycans are attached at residues Asn-47, Asn-186, and Asn-257. Residues 712–732 traverse the membrane as a helical segment; that stretch reads FIVTLGSILLLGLLGSLMVLL. Residues 733–831 lie on the Cytoplasmic side of the membrane; the sequence is SKAVYRHCSS…EAPVPKHTGR (99 aa). Disordered stretches follow at residues 743–763 and 798–831; these read TTRR…MNRE and RWKG…HTGR. A compositionally biased stretch (basic and acidic residues) spans 749 to 763; it reads KPLTKKRDTKRMNRE. Polar residues predominate over residues 805–817; that stretch reads QLPNWPEPSTQHR.

The protein localises to the cell membrane. Cadherins are calcium-dependent cell adhesion proteins. They preferentially interact with themselves in a homophilic manner in connecting cells; cadherins may thus contribute to the sorting of heterogeneous cell types. This chain is Cadherin-related family member 3 (Cdhr3), found in Mus musculus (Mouse).